The sequence spans 90 residues: Molybdopterin synthase sulfur carrier subunit (90 aa).

Glycine 90 is subject to 1-thioglycine; alternate. Glycine 90 carries the glycyl adenylate; alternate modification.

It belongs to the MoaD family. MOCS2A subfamily. As to quaternary structure, heterotetramer; composed of 2 small (Mocs2A) and 2 large (Mocs2B) subunits. C-terminal thiocarboxylation occurs in 2 steps, it is first acyl-adenylated (-COAMP) via the hesA/moeB/thiF part of MOCS3, then thiocarboxylated (-COSH) via the rhodanese domain of MOCS3.

Its subcellular location is the cytoplasm. The protein operates within cofactor biosynthesis; molybdopterin biosynthesis. Acts as a sulfur carrier required for molybdopterin biosynthesis. Component of the molybdopterin synthase complex that catalyzes the conversion of precursor Z into molybdopterin by mediating the incorporation of 2 sulfur atoms into precursor Z to generate a dithiolene group. In the complex, serves as sulfur donor by being thiocarboxylated (-COSH) at its C-terminus by MOCS3. After interaction with Mocs2B, the sulfur is then transferred to precursor Z to form molybdopterin. The protein is Molybdopterin synthase sulfur carrier subunit of Drosophila ananassae (Fruit fly).